The primary structure comprises 176 residues: NAD(P)H-quinone oxidoreductase subunit 6, chloroplastic (176 aa).

The next 5 helical transmembrane spans lie at 10–30 (FLLV…VLLP), 33–53 (IYSA…YILL), 61–81 (AQLL…VMFM), 92–112 (LWTI…ISLI), and 152–172 (FFLP…GAIA).

The protein belongs to the complex I subunit 6 family. In terms of assembly, NDH is composed of at least 16 different subunits, 5 of which are encoded in the nucleus.

It is found in the plastid. The protein resides in the chloroplast thylakoid membrane. The enzyme catalyses a plastoquinone + NADH + (n+1) H(+)(in) = a plastoquinol + NAD(+) + n H(+)(out). The catalysed reaction is a plastoquinone + NADPH + (n+1) H(+)(in) = a plastoquinol + NADP(+) + n H(+)(out). NDH shuttles electrons from NAD(P)H:plastoquinone, via FMN and iron-sulfur (Fe-S) centers, to quinones in the photosynthetic chain and possibly in a chloroplast respiratory chain. The immediate electron acceptor for the enzyme in this species is believed to be plastoquinone. Couples the redox reaction to proton translocation, and thus conserves the redox energy in a proton gradient. The sequence is that of NAD(P)H-quinone oxidoreductase subunit 6, chloroplastic (ndhG) from Coffea arabica (Arabian coffee).